Consider the following 274-residue polypeptide: Ethanolamine ammonia-lyase small subunit (274 aa).

Positions 161, 182, and 211 each coordinate adenosylcob(III)alamin.

Belongs to the EutC family. As to quaternary structure, the basic unit is a heterodimer which dimerizes to form tetramers. The heterotetramers trimerize; 6 large subunits form a core ring with 6 small subunits projecting outwards. Adenosylcob(III)alamin is required as a cofactor.

It is found in the bacterial microcompartment. The enzyme catalyses ethanolamine = acetaldehyde + NH4(+). It functions in the pathway amine and polyamine degradation; ethanolamine degradation. In terms of biological role, catalyzes the deamination of various vicinal amino-alcohols to oxo compounds. Allows this organism to utilize ethanolamine as the sole source of nitrogen and carbon in the presence of external vitamin B12. This Pseudomonas fluorescens (strain Pf0-1) protein is Ethanolamine ammonia-lyase small subunit.